The sequence spans 378 residues: Odorant receptor 45a (378 aa).

Residues 1–30 are Cytoplasmic-facing; sequence MDASYFAVQRRALEIVGFDPSTPQLSLKHP. Residues 31 to 51 traverse the membrane as a helical segment; it reads IWAGILILSLISHNWPMVVYA. Residues 52–129 are Extracellular-facing; that stretch reads LQDLSDLTRL…RYVARSFRNA (78 aa). Residues 130–150 form a helical membrane-spanning segment; sequence AYGVICASAIAPMLLGLWGYV. The Cytoplasmic segment spans residues 151–173; the sequence is ETGVFTPTTPMEFNFWLDERKPH. The chain crosses the membrane as a helical span at residues 174-194; the sequence is FYWPIYVWGVLGVAAAAWLAI. Topologically, residues 195 to 197 are extracellular; that stretch reads ATD. The helical transmembrane segment at 198-218 threads the bilayer; that stretch reads TLFSWLTHNVVIQFQLLELVL. The Cytoplasmic portion of the chain corresponds to 219–249; sequence EEKDLNGGDSRLTGFVSRHRIALDLAKELSS. The chain crosses the membrane as a helical span at residues 250-270; it reads IFGEIVFVKYMLSYLQLCMLA. Residues 271–285 are Extracellular-facing; sequence FRFSRSGWSAQVPFR. The helical transmembrane segment at 286–306 threads the bilayer; it reads ATFLVAIIIQLSSYCYGGEYI. The Cytoplasmic portion of the chain corresponds to 307–342; it reads KQQSLAIAQAVYGQINWPEMTPKKRRLWQMVIMRAQ. A helical membrane pass occupies residues 343-363; the sequence is RPAKIFGFMFVVDLPLLLWVI. Over 364 to 378 the chain is Extracellular; it reads RTAGSFLAMLRTFER.

It belongs to the insect chemoreceptor superfamily. Heteromeric odorant receptor channel (TC 1.A.69) family. Or1a subfamily. Interacts with Orco. Complexes exist early in the endomembrane system in olfactory sensory neurons (OSNs), coupling these complexes to the conserved ciliary trafficking pathway.

Its subcellular location is the cell membrane. In terms of biological role, odorant receptor which mediates acceptance or avoidance behavior, depending on its substrates. The odorant receptor repertoire encodes a large collection of odor stimuli that vary widely in identity, intensity, and duration. May form a complex with Orco to form odorant-sensing units, providing sensitive and prolonged odorant signaling and calcium permeability. Involved in the behavioral responses to hexanol, pentyl acetate, benzyl acetate, and 2-heptanone. The protein is Odorant receptor 45a (Or45a) of Drosophila melanogaster (Fruit fly).